The following is a 344-amino-acid chain: Trace amine-associated receptor 8a (344 aa).

Topologically, residues 1–33 (MTSNFSQAPLQLCYENVNASCIKTPYSPGLRVL) are extracellular. N-linked (GlcNAc...) asparagine glycosylation is found at N4 and N18. 2 disulfides stabilise this stretch: C21/C185 and C96/C189. The chain crosses the membrane as a helical span at residues 34–54 (LYMVFGFGAVLAVCGNLLVVI). The Cytoplasmic segment spans residues 55-67 (SVLHFKQLHSPAN). The chain crosses the membrane as a helical span at residues 68–88 (FLIASLASADFLVGISVMPFS). Residues 89–102 (MVRSIESCWYFGDT) are Extracellular-facing. Residues 103–127 (FCSLHSCCDAAFCYSSLFHLCFISV) form a helical membrane-spanning segment. Residues 128 to 146 (DRYIAVTDPLVYPTKFTVS) are Cytoplasmic-facing. Residues 147-167 (VSGICISISWILPLVYSSAVF) traverse the membrane as a helical segment. Residues 168–196 (YTGISATGIENLVSALNCVGGCQIVVNQD) lie on the Extracellular side of the membrane. Residues 197–217 (WVLIDFLLFLIPTLVMIILYS) traverse the membrane as a helical segment. Residues 218–260 (KIFLVAKQQAVKIETSISGSKGESSLESHKARVAKRERKAAKT) lie on the Cytoplasmic side of the membrane. A helical transmembrane segment spans residues 261–281 (LGVTVVAFMVSWLPYTIDTLI). Over 282–291 (DAFMGFITPA) the chain is Extracellular. A helical membrane pass occupies residues 292 to 314 (YVYEICCWSAYYNSAMNPLIYAF). The Cytoplasmic portion of the chain corresponds to 315–344 (FYPWFRKAIKLILSGEILKSHSSTMSLFSE).

This sequence belongs to the G-protein coupled receptor 1 family.

The protein localises to the cell membrane. In terms of biological role, olfactory receptor activated by trace amines. Trace amine compounds are enriched in animal body fluids and act on trace amine-associated receptors (TAARs) to elicit both intraspecific and interspecific innate behaviors. Ligand-binding causes a conformation change that triggers signaling via G(s)-class of G alpha proteins (GNAL or GNAS). In Rattus norvegicus (Rat), this protein is Trace amine-associated receptor 8a.